A 951-amino-acid chain; its full sequence is UvrABC system protein A (951 aa).

33-40 (GLSGSGKS) is a binding site for ATP. Residues 252–279 (CPICGFTVGELEPRLFSFNAPQGACPDC) form a C4-type zinc finger. ABC transporter domains lie at 309–587 (WNPI…RKSL) and 607–935 (GNGK…QYLK). ATP is bound at residue 639-646 (GVSGSGKS). The C4-type zinc finger occupies 738–764 (CEACHGDGILKIEMNFLPDVFVPCEVC).

This sequence belongs to the ABC transporter superfamily. UvrA family. As to quaternary structure, forms a heterotetramer with UvrB during the search for lesions.

Its subcellular location is the cytoplasm. The UvrABC repair system catalyzes the recognition and processing of DNA lesions. UvrA is an ATPase and a DNA-binding protein. A damage recognition complex composed of 2 UvrA and 2 UvrB subunits scans DNA for abnormalities. When the presence of a lesion has been verified by UvrB, the UvrA molecules dissociate. In Lactiplantibacillus plantarum (strain ATCC BAA-793 / NCIMB 8826 / WCFS1) (Lactobacillus plantarum), this protein is UvrABC system protein A.